The sequence spans 445 residues: GTPase Obg (445 aa).

Residues 7–164 (PEFVDCVTVE…RKLRLEVKSI (158 aa)) enclose the Obg domain. Positions 165–342 (ADVALVGFPS…FTLRLGEICQ (178 aa)) constitute an OBG-type G domain. GTP is bound by residues 171–178 (GFPSVGKS), 196–200 (FTTLH), 217–220 (DVPG), 291–294 (NKID), and 323–325 (SAV). Residues serine 178 and threonine 198 each contribute to the Mg(2+) site. The OCT domain occupies 357-434 (IPAKNTPEFS…IGGVIFTWDP (78 aa)).

The protein belongs to the TRAFAC class OBG-HflX-like GTPase superfamily. OBG GTPase family. Monomer. Mg(2+) is required as a cofactor.

The protein localises to the cytoplasm. In terms of biological role, an essential GTPase which binds GTP, GDP and possibly (p)ppGpp with moderate affinity, with high nucleotide exchange rates and a fairly low GTP hydrolysis rate. Plays a role in control of the cell cycle, stress response, ribosome biogenesis and in those bacteria that undergo differentiation, in morphogenesis control. This Tropheryma whipplei (strain Twist) (Whipple's bacillus) protein is GTPase Obg.